The chain runs to 330 residues: Succinylglutamate desuccinylase (330 aa).

Residues H53, E56, and H147 each coordinate Zn(2+). E210 is a catalytic residue.

This sequence belongs to the AspA/AstE family. Succinylglutamate desuccinylase subfamily. Zn(2+) serves as cofactor.

The catalysed reaction is N-succinyl-L-glutamate + H2O = L-glutamate + succinate. Its pathway is amino-acid degradation; L-arginine degradation via AST pathway; L-glutamate and succinate from L-arginine: step 5/5. Its function is as follows. Transforms N(2)-succinylglutamate into succinate and glutamate. This is Succinylglutamate desuccinylase from Yersinia pseudotuberculosis serotype O:1b (strain IP 31758).